A 399-amino-acid chain; its full sequence is Integral membrane protein GPR137B (399 aa).

Residues 1 to 22 form a disordered region; it reads MRPERPRPRGSAPGPMETPPWD. At 1-46 the chain is on the lumenal side; it reads MRPERPRPRGSAPGPMETPPWDPARNDSLPPTLTPAVPPYVKLGLT. Residue Asn26 is glycosylated (N-linked (GlcNAc...) asparagine). A helical transmembrane segment spans residues 47 to 67; sequence VVYTVFYALLFVFIYVQLWLV. The Cytoplasmic portion of the chain corresponds to 68–79; it reads LRYRHKRLSYQS. Residues 80–100 form a helical membrane-spanning segment; that stretch reads VFLFLCLFWASLRTVLFSFYF. Topologically, residues 101–111 are lumenal; it reads KDFVAANSLSP. Residues 112-132 form a helical membrane-spanning segment; that stretch reads FVFWLLYCFPVCLQFFTLTLM. Residues 133-159 lie on the Cytoplasmic side of the membrane; it reads NLYFTQVIFKAKSKYSPELLKYRLPLY. The helical transmembrane segment at 160–180 threads the bilayer; the sequence is LASLFISLVFLLVNLTCAVLV. Topologically, residues 181–188 are lumenal; the sequence is KTGNWERK. Residues 189–209 traverse the membrane as a helical segment; that stretch reads VIVSVRVAINDTLFVLCAVSL. Over 210–237 the chain is Cytoplasmic; that stretch reads SICLYKISKMSLANIYLESKGSSVCQVT. Residues 238–258 form a helical membrane-spanning segment; the sequence is AIGVTVILLYTSRACYNLFIL. At 259–292 the chain is on the lumenal side; that stretch reads SFSQNKSVHSFDYDWYNVSDQADLKNQLGDAGYV. Residues Asn263 and Asn275 are each glycosylated (N-linked (GlcNAc...) asparagine). Residues 293-313 traverse the membrane as a helical segment; it reads LFGVVLFVWELLPTTLVVYFF. The Cytoplasmic segment spans residues 314–399; sequence RVRNPTKDLT…TLDPDKPSLG (86 aa).

It belongs to the GPR137 family. As to quaternary structure, interaction with RRAGA; increases RRAGA recruitment to lysosomes. Interacts with MTOR; this interaction is amino acid sensitive. As to expression, expressed in kidney, heart, brain and placenta.

The protein resides in the lysosome membrane. In terms of biological role, lysosomal integral membrane protein that regulates the localization and activity of mTORC1, a signaling complex promoting cell growth in response to growth factors, energy levels, and amino acids. Interacts with Rag GTPases and increases the lysosomial localization and activity of Rag GTPases and thereby regulates mTORC1 translocation and activity in lysosome. Involved in the regulation of lysosomal morphology and autophagy. Also acts as a negative regulator of osteoclast activity. Involved in interleukin-4-induced M2 macrophage polarization. In Homo sapiens (Human), this protein is Integral membrane protein GPR137B (GPR137B).